The following is a 431-amino-acid chain: Islet cell autoantigen 1-like protein (431 aa).

Residues 44-247 (ASDAELDAKL…TAQMMTQIQE (204 aa)) form the AH domain. Disordered regions lie at residues 295 to 316 (EEEEEERFEREPAVARALPRDS) and 351 to 372 (CGSPCTGLTSQEPSVGPGSLTS). Over residues 301–316 (RFEREPAVARALPRDS) the composition is skewed to basic and acidic residues. Positions 356-372 (TGLTSQEPSVGPGSLTS) are enriched in polar residues.

This Mus musculus (Mouse) protein is Islet cell autoantigen 1-like protein (Ica1l).